Here is a 416-residue protein sequence, read N- to C-terminus: Tyrosine--tRNA ligase (416 aa).

Tyr34 contributes to the L-tyrosine binding site. Residues 39 to 48 (PTGDSLHIGH) carry the 'HIGH' region motif. L-tyrosine contacts are provided by Tyr165 and Gln169. The short motif at 227-231 (KFGKT) is the 'KMSKS' region element. Residue Lys230 participates in ATP binding. The S4 RNA-binding domain maps to 349 to 416 (ENIIIWLTDN…KKHYYLARVK (68 aa)).

Belongs to the class-I aminoacyl-tRNA synthetase family. TyrS type 1 subfamily. As to quaternary structure, homodimer.

The protein localises to the cytoplasm. The catalysed reaction is tRNA(Tyr) + L-tyrosine + ATP = L-tyrosyl-tRNA(Tyr) + AMP + diphosphate + H(+). In terms of biological role, catalyzes the attachment of tyrosine to tRNA(Tyr) in a two-step reaction: tyrosine is first activated by ATP to form Tyr-AMP and then transferred to the acceptor end of tRNA(Tyr). In Limosilactobacillus reuteri (strain DSM 20016) (Lactobacillus reuteri), this protein is Tyrosine--tRNA ligase.